The primary structure comprises 290 residues: Elongation factor Ts (290 aa).

The interval 82–85 (TDFV) is involved in Mg(2+) ion dislocation from EF-Tu.

It belongs to the EF-Ts family.

The protein localises to the cytoplasm. Its function is as follows. Associates with the EF-Tu.GDP complex and induces the exchange of GDP to GTP. It remains bound to the aminoacyl-tRNA.EF-Tu.GTP complex up to the GTP hydrolysis stage on the ribosome. The protein is Elongation factor Ts of Thiobacillus denitrificans (strain ATCC 25259 / T1).